We begin with the raw amino-acid sequence, 578 residues long: Ketol-acid reductoisomerase, chloroplastic (578 aa).

A chloroplast-targeting transit peptide spans 1 to 52 (MAASTTLALSHPKTLAAAAAAAPKAPTAPAAVSFPVSHAACAPLAARRRAVT). One can recognise a KARI N-terminal Rossmann domain in the interval 90-288 (VRGGRNLFPL…ALGSPFTFAT (199 aa)). Residues 111–118 (GVIGWGSQ), 144–149 (RKGSKS), and 183–187 (SDAAQ) contribute to the NADP(+) site. His-208 is a catalytic residue. 2 KARI C-terminal knotted domains span residues 289-437 (TLEQ…RPEN) and 438-574 (DLGP…RPEL). Mg(2+) is bound by residues Asp-297, Glu-301, Glu-474, and Glu-478. Ser-500 lines the substrate pocket.

The protein belongs to the ketol-acid reductoisomerase family. In terms of assembly, homodimer. The cofactor is Mg(2+).

The protein resides in the plastid. It localises to the chloroplast. The catalysed reaction is (2R)-2,3-dihydroxy-3-methylbutanoate + NADP(+) = (2S)-2-acetolactate + NADPH + H(+). It catalyses the reaction (2R,3R)-2,3-dihydroxy-3-methylpentanoate + NADP(+) = (S)-2-ethyl-2-hydroxy-3-oxobutanoate + NADPH + H(+). The protein operates within amino-acid biosynthesis; L-isoleucine biosynthesis; L-isoleucine from 2-oxobutanoate: step 2/4. It functions in the pathway amino-acid biosynthesis; L-valine biosynthesis; L-valine from pyruvate: step 2/4. The sequence is that of Ketol-acid reductoisomerase, chloroplastic from Oryza sativa subsp. japonica (Rice).